The sequence spans 270 residues: Phosphatidylglycerol--prolipoprotein diacylglyceryl transferase (270 aa).

The next 4 membrane-spanning stretches (helical) occupy residues 19–39 (FPVY…LWLA), 56–76 (LVLI…VIFE), 92–112 (QGGL…VLFA), and 116–136 (GLSF…GQAI). Arginine 138 is an a 1,2-diacyl-sn-glycero-3-phospho-(1'-sn-glycerol) binding site. 3 consecutive transmembrane segments (helical) span residues 178-198 (HPTF…LLAL), 206-226 (GELF…VEGL), and 236-256 (LRIA…FIIV).

Belongs to the Lgt family.

It localises to the cell membrane. The enzyme catalyses L-cysteinyl-[prolipoprotein] + a 1,2-diacyl-sn-glycero-3-phospho-(1'-sn-glycerol) = an S-1,2-diacyl-sn-glyceryl-L-cysteinyl-[prolipoprotein] + sn-glycerol 1-phosphate + H(+). The protein operates within protein modification; lipoprotein biosynthesis (diacylglyceryl transfer). Functionally, catalyzes the transfer of the diacylglyceryl group from phosphatidylglycerol to the sulfhydryl group of the N-terminal cysteine of a prolipoprotein, the first step in the formation of mature lipoproteins. The protein is Phosphatidylglycerol--prolipoprotein diacylglyceryl transferase of Bacillus cereus (strain ATCC 14579 / DSM 31 / CCUG 7414 / JCM 2152 / NBRC 15305 / NCIMB 9373 / NCTC 2599 / NRRL B-3711).